The sequence spans 262 residues: Large ribosomal subunit protein uL10m (262 aa).

The transit peptide at Met1–His28 directs the protein to the mitochondrion. The segment at Gly243–Ala262 is disordered.

This sequence belongs to the universal ribosomal protein uL10 family. In terms of assembly, component of the mitochondrial ribosome large subunit (39S) which comprises a 16S rRNA and about 50 distinct proteins.

The protein localises to the mitochondrion. This Mus musculus (Mouse) protein is Large ribosomal subunit protein uL10m (Mrpl10).